The primary structure comprises 291 residues: ATP synthase gamma chain (291 aa).

Belongs to the ATPase gamma chain family. In terms of assembly, F-type ATPases have 2 components, CF(1) - the catalytic core - and CF(0) - the membrane proton channel. CF(1) has five subunits: alpha(3), beta(3), gamma(1), delta(1), epsilon(1). CF(0) has three main subunits: a, b and c.

The protein localises to the cell inner membrane. In terms of biological role, produces ATP from ADP in the presence of a proton gradient across the membrane. The gamma chain is believed to be important in regulating ATPase activity and the flow of protons through the CF(0) complex. The chain is ATP synthase gamma chain from Neisseria gonorrhoeae (strain NCCP11945).